We begin with the raw amino-acid sequence, 369 residues long: p21-activated protein kinase-interacting protein 1-like (369 aa).

WD repeat units lie at residues 33-70, 73-111, 114-153, 195-233, and 236-278; these read AHTASLSAVAVNSKYVVTGSRDESIQIYDMRKKVEHGA, QHNGTITCLEFYGTAHLLSGAEDGLICIWNTKRWECLKS, AHKGHVTSLSIHPSGKLALSVGTDKTLRTWNLVEGRSAFI, TIEKRISSIRFITDSVLAIAGDDEIIRFYSCDSQKCLCE, and AREN…NNVP. The segment at 311-369 is disordered; it reads ATSTEANESEKPSAVKKKKVCGMNKSGKLTKQRRRIVPAKRKLEAPLQKKKKKKQNSSE. 2 stretches are compositionally biased toward basic residues: residues 338-350 and 358-369; these read KLTKQRRRIVPAK and QKKKKKKQNSSE.

The protein resides in the nucleus. It localises to the nucleolus. Negatively regulates the PAK1 kinase. PAK1 is a member of the PAK kinase family, which has been shown to play a positive role in the regulation of signaling pathways involving MAPK8 and RELA. PAK1 exists as an inactive homodimer, which is activated by binding of small GTPases such as CDC42 to an N-terminal regulatory domain. PAK1IP1 also binds to the N-terminus of PAK1, and inhibits the specific activation of PAK1 by CDC42. May be involved in ribosomal large subunit assembly. The protein is p21-activated protein kinase-interacting protein 1-like (PAK1IP1) of Gallus gallus (Chicken).